We begin with the raw amino-acid sequence, 177 residues long: UPF0114 protein jhp_0175 (177 aa).

Transmembrane regions (helical) follow at residues 15-35, 54-74, and 145-165; these read WLLAPLCIAMSLVLVVLGYVF, LVLSALGLVDLLFMAGLVLMV, and PIFWQVVIHLVFVCSALLTAV.

The protein belongs to the UPF0114 family.

It localises to the cell membrane. The chain is UPF0114 protein jhp_0175 from Helicobacter pylori (strain J99 / ATCC 700824) (Campylobacter pylori J99).